A 361-amino-acid chain; its full sequence is tRNA/tmRNA (uracil-C(5))-methyltransferase (361 aa).

Q185, Y213, N218, E234, and D294 together coordinate S-adenosyl-L-methionine. C319 serves as the catalytic Nucleophile. The active-site Proton acceptor is E353.

The protein belongs to the class I-like SAM-binding methyltransferase superfamily. RNA M5U methyltransferase family. TrmA subfamily.

It carries out the reaction uridine(54) in tRNA + S-adenosyl-L-methionine = 5-methyluridine(54) in tRNA + S-adenosyl-L-homocysteine + H(+). The enzyme catalyses uridine(341) in tmRNA + S-adenosyl-L-methionine = 5-methyluridine(341) in tmRNA + S-adenosyl-L-homocysteine + H(+). Dual-specificity methyltransferase that catalyzes the formation of 5-methyluridine at position 54 (m5U54) in all tRNAs, and that of position 341 (m5U341) in tmRNA (transfer-mRNA). This is tRNA/tmRNA (uracil-C(5))-methyltransferase from Pseudomonas entomophila (strain L48).